Consider the following 300-residue polypeptide: Protoheme IX farnesyltransferase (300 aa).

9 consecutive transmembrane segments (helical) span residues 24–44 (VTQL…PGMV), 48–68 (VLLG…AINC), 94–114 (LQIL…LYTF), 118–138 (LTIW…TLLL), 146–166 (IVIG…AVTG), 172–192 (AWIL…VLAL), 217–237 (LHIL…FISG), 239–259 (SGAV…AYAW), and 278–298 (IVYL…RPVI).

This sequence belongs to the UbiA prenyltransferase family. Protoheme IX farnesyltransferase subfamily.

The protein resides in the cell inner membrane. It catalyses the reaction heme b + (2E,6E)-farnesyl diphosphate + H2O = Fe(II)-heme o + diphosphate. It functions in the pathway porphyrin-containing compound metabolism; heme O biosynthesis; heme O from protoheme: step 1/1. Functionally, converts heme B (protoheme IX) to heme O by substitution of the vinyl group on carbon 2 of heme B porphyrin ring with a hydroxyethyl farnesyl side group. The sequence is that of Protoheme IX farnesyltransferase from Burkholderia mallei (strain NCTC 10247).